A 200-amino-acid polypeptide reads, in one-letter code: Anthranilate synthase component 2 (200 aa).

Residues 3-196 (NILLLDNIDS…IHWASLKYIT (194 aa)) enclose the Glutamine amidotransferase type-1 domain. 57–59 (GPS) is an L-glutamine binding site. C84 (nucleophile; for GATase activity) is an active-site residue. Residues Q88 and 134–135 (SL) each bind L-glutamine. Active-site for GATase activity residues include H170 and E172.

In terms of assembly, heterotetramer consisting of two non-identical subunits: a beta subunit (TrpG) and a large alpha subunit (TrpE).

It catalyses the reaction chorismate + L-glutamine = anthranilate + pyruvate + L-glutamate + H(+). The protein operates within amino-acid biosynthesis; L-tryptophan biosynthesis; L-tryptophan from chorismate: step 1/5. Part of a heterotetrameric complex that catalyzes the two-step biosynthesis of anthranilate, an intermediate in the biosynthesis of L-tryptophan. In the first step, the glutamine-binding beta subunit (TrpG) of anthranilate synthase (AS) provides the glutamine amidotransferase activity which generates ammonia as a substrate that, along with chorismate, is used in the second step, catalyzed by the large alpha subunit of AS (TrpE) to produce anthranilate. In the absence of TrpG, TrpE can synthesize anthranilate directly from chorismate and high concentrations of ammonia. The sequence is that of Anthranilate synthase component 2 (trpG) from Buchnera aphidicola subsp. Acyrthosiphon pisum (strain APS) (Acyrthosiphon pisum symbiotic bacterium).